The sequence spans 163 residues: 3-isopropylmalate dehydratase small subunit (163 aa).

This sequence belongs to the LeuD family. LeuD type 2 subfamily. As to quaternary structure, heterodimer of LeuC and LeuD.

The enzyme catalyses (2R,3S)-3-isopropylmalate = (2S)-2-isopropylmalate. The protein operates within amino-acid biosynthesis; L-leucine biosynthesis; L-leucine from 3-methyl-2-oxobutanoate: step 2/4. In terms of biological role, catalyzes the isomerization between 2-isopropylmalate and 3-isopropylmalate, via the formation of 2-isopropylmaleate. The polypeptide is 3-isopropylmalate dehydratase small subunit (leuD) (Pyrococcus horikoshii (strain ATCC 700860 / DSM 12428 / JCM 9974 / NBRC 100139 / OT-3)).